Consider the following 299-residue polypeptide: Taste receptor type 2 member 16 (299 aa).

Over methionine 1 to glutamine 5 the chain is Extracellular. A helical membrane pass occupies residues valine 6–cysteine 26. At threonine 27–proline 44 the chain is on the cytoplasmic side. A helical membrane pass occupies residues valine 45–leucine 65. Residues tyrosine 66–serine 82 lie on the Extracellular side of the membrane. Residues valine 83–tyrosine 103 form a helical membrane-spanning segment. Residues cysteine 104–leucine 125 lie on the Cytoplasmic side of the membrane. The chain crosses the membrane as a helical span at residues valine 126–valine 146. At lysine 147–methionine 183 the chain is on the extracellular side. An N-linked (GlcNAc...) asparagine glycan is attached at asparagine 163. The chain crosses the membrane as a helical span at residues isoleucine 184 to leucine 204. Residues valine 205–threonine 233 are Cytoplasmic-facing. A helical transmembrane segment spans residues phenylalanine 234–phenylalanine 254. The Extracellular segment spans residues aspartate 255 to serine 258. Residues tryptophan 259 to methionine 279 traverse the membrane as a helical segment. Residues methionine 280–serine 299 lie on the Cytoplasmic side of the membrane.

Belongs to the G-protein coupled receptor T2R family. Interacts with RTP3 and RTP4. Expressed in subsets of taste receptor cells of the tongue and palate epithelium and exclusively in gustducin-positive cells. Expressed in the antrum and fundus (part of the stomach), duodenum and in gastric endocrine cells.

It localises to the cell membrane. Gustducin-coupled receptor implicated in the perception of bitter compounds in the oral cavity and the gastrointestinal tract. Signals through PLCB2 and the calcium-regulated cation channel TRPM5. The protein is Taste receptor type 2 member 16 (Tas2r16) of Rattus norvegicus (Rat).